Here is a 66-residue protein sequence, read N- to C-terminus: ATP synthase F(0) complex subunit 8 (66 aa).

The helical transmembrane segment at 8-24 threads the bilayer; the sequence is TWLTMILSMFLTLFIIF. The residue at position 54 (K54) is an N6-acetyllysine; alternate. K54 is modified (N6-succinyllysine; alternate). K57 is subject to N6-acetyllysine.

The protein belongs to the ATPase protein 8 family. Component of the ATP synthase complex composed at least of ATP5F1A/subunit alpha, ATP5F1B/subunit beta, ATP5MC1/subunit c (homooctomer), MT-ATP6/subunit a, MT-ATP8/subunit 8, ATP5ME/subunit e, ATP5MF/subunit f, ATP5MG/subunit g, ATP5MK/subunit k, ATP5MJ/subunit j, ATP5F1C/subunit gamma, ATP5F1D/subunit delta, ATP5F1E/subunit epsilon, ATP5PF/subunit F6, ATP5PB/subunit b, ATP5PD/subunit d, ATP5PO/subunit OSCP. ATP synthase complex consists of a soluble F(1) head domain (subunits alpha(3) and beta(3)) - the catalytic core - and a membrane F(0) domain - the membrane proton channel (subunits c, a, 8, e, f, g, k and j). These two domains are linked by a central stalk (subunits gamma, delta, and epsilon) rotating inside the F1 region and a stationary peripheral stalk (subunits F6, b, d, and OSCP). Interacts with PRICKLE3.

It localises to the mitochondrion membrane. Its function is as follows. Subunit 8, of the mitochondrial membrane ATP synthase complex (F(1)F(0) ATP synthase or Complex V) that produces ATP from ADP in the presence of a proton gradient across the membrane which is generated by electron transport complexes of the respiratory chain. ATP synthase complex consist of a soluble F(1) head domain - the catalytic core - and a membrane F(1) domain - the membrane proton channel. These two domains are linked by a central stalk rotating inside the F(1) region and a stationary peripheral stalk. During catalysis, ATP synthesis in the catalytic domain of F(1) is coupled via a rotary mechanism of the central stalk subunits to proton translocation. In vivo, can only synthesize ATP although its ATP hydrolase activity can be activated artificially in vitro. Part of the complex F(0) domain. The sequence is that of ATP synthase F(0) complex subunit 8 from Bos mutus grunniens (Wild yak).